The chain runs to 77 residues: Large ribosomal subunit protein bL28 (77 aa).

Belongs to the bacterial ribosomal protein bL28 family.

The sequence is that of Large ribosomal subunit protein bL28 from Polaromonas naphthalenivorans (strain CJ2).